Consider the following 361-residue polypeptide: Holliday junction branch migration complex subunit RuvB (361 aa).

The tract at residues 1–183 (MAEPSLVAAG…FGFTGHLEFY (183 aa)) is large ATPase domain (RuvB-L). ATP-binding positions include Leu-22, Arg-23, Gly-64, Lys-67, Thr-68, Thr-69, 130 to 132 (EDF), Arg-173, Tyr-183, and Arg-220. Residue Thr-68 participates in Mg(2+) binding. The segment at 184–254 (SVPELELVLR…SASAALDMYE (71 aa)) is small ATPAse domain (RuvB-S). Positions 257 to 361 (KKGLDRLDRS…VTGEWAPESQ (105 aa)) are head domain (RuvB-H). Arg-312 and Arg-317 together coordinate DNA.

It belongs to the RuvB family. Homohexamer. Forms an RuvA(8)-RuvB(12)-Holliday junction (HJ) complex. HJ DNA is sandwiched between 2 RuvA tetramers; dsDNA enters through RuvA and exits via RuvB. An RuvB hexamer assembles on each DNA strand where it exits the tetramer. Each RuvB hexamer is contacted by two RuvA subunits (via domain III) on 2 adjacent RuvB subunits; this complex drives branch migration. In the full resolvosome a probable DNA-RuvA(4)-RuvB(12)-RuvC(2) complex forms which resolves the HJ.

It is found in the cytoplasm. The enzyme catalyses ATP + H2O = ADP + phosphate + H(+). The RuvA-RuvB-RuvC complex processes Holliday junction (HJ) DNA during genetic recombination and DNA repair, while the RuvA-RuvB complex plays an important role in the rescue of blocked DNA replication forks via replication fork reversal (RFR). RuvA specifically binds to HJ cruciform DNA, conferring on it an open structure. The RuvB hexamer acts as an ATP-dependent pump, pulling dsDNA into and through the RuvAB complex. RuvB forms 2 homohexamers on either side of HJ DNA bound by 1 or 2 RuvA tetramers; 4 subunits per hexamer contact DNA at a time. Coordinated motions by a converter formed by DNA-disengaged RuvB subunits stimulates ATP hydrolysis and nucleotide exchange. Immobilization of the converter enables RuvB to convert the ATP-contained energy into a lever motion, pulling 2 nucleotides of DNA out of the RuvA tetramer per ATP hydrolyzed, thus driving DNA branch migration. The RuvB motors rotate together with the DNA substrate, which together with the progressing nucleotide cycle form the mechanistic basis for DNA recombination by continuous HJ branch migration. Branch migration allows RuvC to scan DNA until it finds its consensus sequence, where it cleaves and resolves cruciform DNA. This Pseudarthrobacter chlorophenolicus (strain ATCC 700700 / DSM 12829 / CIP 107037 / JCM 12360 / KCTC 9906 / NCIMB 13794 / A6) (Arthrobacter chlorophenolicus) protein is Holliday junction branch migration complex subunit RuvB.